Reading from the N-terminus, the 349-residue chain is Beta-glucanase (349 aa).

Positions 1 to 27 (MNIKKTAVKSALAVAAAAAALTTNVSA) are cleaved as a signal peptide. A GH16 domain is found at 28 to 197 (KDFSGAELYT…WVKVYKYTPG (170 aa)). The Nucleophile role is filled by Glu79. Glu83 functions as the Proton donor in the catalytic mechanism. The segment at 258–311 (SFNGQVPRDDEPAPQSSSSAPASSSSVPASSSSVPASSSSAFVPPSSSSATNAI) is disordered. Residues 270-307 (APQSSSSAPASSSSVPASSSSVPASSSSAFVPPSSSSA) are compositionally biased toward low complexity. Tandem repeats lie at residues 271–277 (PQSSSSA), 278–284 (PASSSSV), 285–291 (PASSSSV), 292–298 (PASSSSA), and 301–307 (PPSSSSA). Residues 271 to 307 (PQSSSSAPASSSSVPASSSSVPASSSSAFVPPSSSSA) form a 5 X 7 AA tandem repeats of P-X-S-S-S-S-X region.

The protein belongs to the glycosyl hydrolase 16 family.

It catalyses the reaction Hydrolysis of (1-&gt;4)-beta-D-glucosidic linkages in beta-D-glucans containing (1-&gt;3)- and (1-&gt;4)-bonds.. The polypeptide is Beta-glucanase (Fibrobacter succinogenes (strain ATCC 19169 / S85)).